The primary structure comprises 800 residues: Calmodulin-sensitive adenylate cyclase (800 aa).

The first 33 residues, 1–33 (MTRNKFIPNKFSIISFSVLLFAISSSQAIEVNA), serve as a signal peptide directing secretion. In terms of domain architecture, ATLF-like spans 60–273 (KDSINNLVKT…MFEYMNKLEK (214 aa)). Residues 294–349 (DVLKGEKALKASGLVPEHADAFKKIARELNTYILFRPVNKLATNLIKSGVATKGLN) form a catalytic CA1 region. A catalytic CB region spans residues 350–489 (VHGKSSDWGP…NVEGVLKPLT (140 aa)). Histidine 351 functions as the Proton acceptor in the catalytic mechanism. A catalytic CA2 region spans residues 490-622 (ADYDLFALAP…RFIEKNITGK (133 aa)). Aspartate 491 and aspartate 493 together coordinate Mg(2+). 3',5'-cyclic AMP-binding positions include threonine 548 and 577–579 (HGT). Mg(2+) is bound at residue histidine 577. An interaction with calmodulin region spans residues 623 to 800 (DYLYYFNRSY…EVFQKIIDEK (178 aa)).

It belongs to the adenylyl cyclase class-2 family. In terms of assembly, interacts (via ATLF domain) with the cleaved form of protective antigen (PA-63) anthrax toxin; interaction is required for EF translocation into the host cytoplasm. Ca(2+) serves as cofactor.

The protein resides in the secreted. It is found in the host cytoplasm. The protein localises to the host cytosol. It carries out the reaction ATP = 3',5'-cyclic AMP + diphosphate. Host calmodulin is an absolute requirement for its activation. Inhibited by ethyl 5-aminopyrazolo[1,5-a]quinazoline-3-carboxylate. In terms of biological role, edema factor (EF), which constitutes one of the three proteins composing the anthrax toxin, causes edema in the host. Acts as a calmodulin-dependent adenylyl cyclase by converting ATP to cAMP, leading to dramatic elevation of intracellular cAMP levels in the host, thereby causing edema. EF is not toxic by itself and only acts as an edema factor when associated with protective antigen (PA) to form the edema toxin (EdTx). Required for the survival of germinated spores within macrophages at the early stages of infection. This Bacillus anthracis protein is Calmodulin-sensitive adenylate cyclase (cya).